The following is a 378-amino-acid chain: Chaperone protein DnaJ (378 aa).

The J domain maps to 5 to 69; sequence EFYDRLGVSK…QKRAAYDQYG (65 aa). The segment at 135–217 adopts a CR-type zinc-finger fold; sequence GTEKEVKYHR…CHGTGHEKQA (83 aa). C148, C151, C165, C168, C191, C194, C205, and C208 together coordinate Zn(2+). 4 CXXCXGXG motif repeats span residues 148-155, 165-172, 191-198, and 205-212; these read CRTCNGSG, CGRCHGAG, CDVCHGRG, and CTTCHGTG.

It belongs to the DnaJ family. As to quaternary structure, homodimer. Zn(2+) serves as cofactor.

It localises to the cytoplasm. Functionally, participates actively in the response to hyperosmotic and heat shock by preventing the aggregation of stress-denatured proteins and by disaggregating proteins, also in an autonomous, DnaK-independent fashion. Unfolded proteins bind initially to DnaJ; upon interaction with the DnaJ-bound protein, DnaK hydrolyzes its bound ATP, resulting in the formation of a stable complex. GrpE releases ADP from DnaK; ATP binding to DnaK triggers the release of the substrate protein, thus completing the reaction cycle. Several rounds of ATP-dependent interactions between DnaJ, DnaK and GrpE are required for fully efficient folding. Also involved, together with DnaK and GrpE, in the DNA replication of plasmids through activation of initiation proteins. The chain is Chaperone protein DnaJ from Streptococcus pneumoniae serotype 4 (strain ATCC BAA-334 / TIGR4).